The following is a 316-amino-acid chain: MAALIRCCSSFSHTSGGQPPPRDKSRAPEIGKFATSIGYSVVRKPGDHPPFSKIIHSSSQPKERQGKGILQTPFASVGSLDKFSAFEGIGRLKLPVMAVLLTNSLQMATPLEALAAEICEPESSMFSMPILLLVALIGATVGGLLARQRKGELQRLNEQLRQINAALRRQAKIESYAPSLSYAPVGARIPDSEIIVEPKKQELISKLKTGKTFLRNQEPEKAYTEFKIALELAQSLKDPTEEKKAARGLGASLQRQGKYREAIQYHSMVLAISKRESEDSGITEAYGAIADCYTELGDLEKAGKFYDTYIARLETD.

The transit peptide at 1–26 (MAALIRCCSSFSHTSGGQPPPRDKSR) directs the protein to the chloroplast. Residues 125 to 145 (MFSMPILLLVALIGATVGGLL) form a helical membrane-spanning segment. Residues 144–175 (LLARQRKGELQRLNEQLRQINAALRRQAKIES) are a coiled coil. TPR repeat units lie at residues 203–236 (LISK…AQSL), 243–276 (KKAA…SKRE), and 283–316 (TEAY…LETD).

As to quaternary structure, part of the FLU-containing chloroplast membrane complex composed of FLU, CRD1, PORB, PORC, CHLP and HEMA1. Interacts with HEMA1 (via C-terminus) only in the absence of light. No interaction with HEMA2.

The protein resides in the plastid. Its subcellular location is the chloroplast membrane. The protein localises to the chloroplast thylakoid membrane. In terms of biological role, negative regulator of tetrapyrrole biosynthesis (including chlorophyll) in chloroplasts, probably via HEMA1 repression. Inhibits especially the magnesium ion Mg(2+) branch of tetrapyrrole biosynthesis, but independently of heme. The chain is Protein FLUORESCENT IN BLUE LIGHT, chloroplastic (FLU) from Arabidopsis thaliana (Mouse-ear cress).